The sequence spans 195 residues: Packaging protein 2 (195 aa).

Residues 1–124 form a disordered region; it reads MAPKKKLQLP…QEQQQRQGYR (124 aa). Residues 15–53 show a composition bias toward acidic residues; sequence TDEEEYWDSQAEEVLDEEEEMMEDWDSLDEASEAEEVSD. The span at 54 to 63 shows a compositional bias: low complexity; the sequence is ETPSPSVAFP.

The protein belongs to the adenoviridae splicing factor family. As to quaternary structure, part of a genome packaging complex composed of packaging proteins 1, 2 and 3; this complex specifically binds to the packaging sequence on the left end of viral genomic DNA and performs packaging of the viral genome. Self-assembles into higher-order structures.

Its subcellular location is the host nucleus. Its function is as follows. Component of the packaging machinery which encapsidates the viral DNA into preformed capsids and transcriptional activator of the viral major late promoter (MLP). Binds, along with packaging proteins 1 and 3, to the specific packaging sequence on the left end of viral genomic DNA and plays an active role in packaging of the viral genome into preformed capsids. Specifically binds to the 5'-TTTG-3' nucleotides of the repeats making up the packaging sequence. Forms a transcription factor called DEF-A through cooperative binding with packaging protein 1. DEF-A binds to downstream elements of the major late promoter (MLP) and stimulates transcription from the MLP after initiation of viral DNA replication. Simultaneously suppresses early gene expression and is thus likely to participate in the early-late switch in the expression pattern of the late viral proteins. May as well enhance transcription from IVa2 and pIX promoters. The sequence is that of Packaging protein 2 from Homo sapiens (Human).